A 987-amino-acid polypeptide reads, in one-letter code: Probable outer membrane protein PmpG (987 aa).

Positions 1–25 are cleaved as a signal peptide; sequence MMQTPFHKFFLLAMLSYSLLQGGHA. The region spanning 707–987 is the Autotransporter domain; that stretch reads GRAYCRGIWI…GLSIGSKIRF (281 aa).

It belongs to the PMP outer membrane protein family.

Its subcellular location is the secreted. The protein resides in the cell wall. The protein localises to the cell outer membrane. This chain is Probable outer membrane protein PmpG (pmpG), found in Chlamydia muridarum (strain MoPn / Nigg).